The following is a 219-amino-acid chain: Phosphoribosylformylglycinamidine synthase subunit PurQ (219 aa).

Positions 2 to 219 (KIAVITFPGS…KVVLDLILGS (218 aa)) constitute a Glutamine amidotransferase type-1 domain. C86 acts as the Nucleophile in catalysis. Active-site residues include H195 and E197.

As to quaternary structure, part of the FGAM synthase complex composed of 1 PurL, 1 PurQ and 2 PurS subunits.

It localises to the cytoplasm. It carries out the reaction N(2)-formyl-N(1)-(5-phospho-beta-D-ribosyl)glycinamide + L-glutamine + ATP + H2O = 2-formamido-N(1)-(5-O-phospho-beta-D-ribosyl)acetamidine + L-glutamate + ADP + phosphate + H(+). The catalysed reaction is L-glutamine + H2O = L-glutamate + NH4(+). It participates in purine metabolism; IMP biosynthesis via de novo pathway; 5-amino-1-(5-phospho-D-ribosyl)imidazole from N(2)-formyl-N(1)-(5-phospho-D-ribosyl)glycinamide: step 1/2. Functionally, part of the phosphoribosylformylglycinamidine synthase complex involved in the purines biosynthetic pathway. Catalyzes the ATP-dependent conversion of formylglycinamide ribonucleotide (FGAR) and glutamine to yield formylglycinamidine ribonucleotide (FGAM) and glutamate. The FGAM synthase complex is composed of three subunits. PurQ produces an ammonia molecule by converting glutamine to glutamate. PurL transfers the ammonia molecule to FGAR to form FGAM in an ATP-dependent manner. PurS interacts with PurQ and PurL and is thought to assist in the transfer of the ammonia molecule from PurQ to PurL. This chain is Phosphoribosylformylglycinamidine synthase subunit PurQ, found in Leptospira interrogans serogroup Icterohaemorrhagiae serovar copenhageni (strain Fiocruz L1-130).